The following is a 39-amino-acid chain: Photosystem II reaction center protein L (39 aa).

Residues 18–38 traverse the membrane as a helical segment; sequence SLYLGLLIVFTTGILFSSYFF.

It belongs to the PsbL family. In terms of assembly, PSII is composed of 1 copy each of membrane proteins PsbA, PsbB, PsbC, PsbD, PsbE, PsbF, PsbH, PsbI, PsbJ, PsbK, PsbL, PsbM, PsbT, PsbX, PsbY, PsbZ, Psb30/Ycf12, peripheral proteins PsbO, CyanoQ (PsbQ), PsbU, PsbV and a large number of cofactors. It forms dimeric complexes.

It is found in the cellular thylakoid membrane. One of the components of the core complex of photosystem II (PSII). PSII is a light-driven water:plastoquinone oxidoreductase that uses light energy to abstract electrons from H(2)O, generating O(2) and a proton gradient subsequently used for ATP formation. It consists of a core antenna complex that captures photons, and an electron transfer chain that converts photonic excitation into a charge separation. This subunit is found at the monomer-monomer interface and is required for correct PSII assembly and/or dimerization. This Synechococcus sp. (strain CC9311) protein is Photosystem II reaction center protein L.